Consider the following 1360-residue polypeptide: Transmembrane protein 94 (1360 aa).

Topologically, residues 1–64 are cytoplasmic; sequence MDLREKHLGE…FLHLSNRCSC (64 aa). A helical transmembrane segment spans residues 65 to 85; the sequence is FHWPGASLMLLAVLLLLCCCG. The Lumenal portion of the chain corresponds to 86–92; sequence GQPAGSQ. A helical transmembrane segment spans residues 93–113; it reads GVELVNASALFLLLLLNLVLI. The Cytoplasmic portion of the chain corresponds to 114-273; the sequence is GRQDRLKRRE…RPVTALDNER (160 aa). Phosphoserine is present on residues serine 221 and serine 225. Residues 274 to 294 form a helical membrane-spanning segment; it reads FTVQSVMLHYAVPVVLAGFLI. Topologically, residues 295–320 are lumenal; sequence TNALRFMFKAPGVTSWQYTLLQLQVN. The helical transmembrane segment at 321 to 341 threads the bilayer; that stretch reads GMLPILPLLFPVLWVLATACG. At 342 to 1096 the chain is on the cytoplasmic side; sequence EARVLAQMSK…RHATYGIRKC (755 aa). Positions 417–422 match the DKQGIL motif; sequence DKQGIL. Serine 444, serine 445, and serine 454 each carry phosphoserine. Residues 487 to 545 are disordered; sequence EQERSDWLADGPKPSEPYPHHKGHGRSKHPSGSNVSFSRDTEGGEEEPSKAQPGTEGDP. The segment covering 506–515 has biased composition (basic residues); that stretch reads HHKGHGRSKH. Serine 517, serine 522, serine 802, and serine 945 each carry phosphoserine. A helical membrane pass occupies residues 1097–1117; that stretch reads FLFLLQCQLTLVVIQFLSCLV. At 1118-1124 the chain is on the lumenal side; it reads QLPPLLS. A helical membrane pass occupies residues 1125 to 1145; that stretch reads TTDILWLSCFCYPLLSISLLG. At 1146 to 1171 the chain is on the cytoplasmic side; that stretch reads KPPHSSIMSMATGKNLQSIPKKTQHY. A helical transmembrane segment spans residues 1172–1192; that stretch reads FLLCFLLKFSLTISSCLVCFG. Residues 1193–1232 are Lumenal-facing; sequence FTLQSFCDSARARNLTNCSSVMLCSNDDRAPAWFEDFANG. 2 N-linked (GlcNAc...) asparagine glycosylation sites follow: asparagine 1206 and asparagine 1209. Residues 1233 to 1253 traverse the membrane as a helical segment; it reads LLSAQKLTAALIVLHTVFISI. Over 1254-1269 the chain is Cytoplasmic; that stretch reads THVHRTKPLWRKSPLT. The helical transmembrane segment at 1270–1290 threads the bilayer; that stretch reads NLWWAVTVPVVLLGQVVQTVV. Residues 1291-1310 are Lumenal-facing; the sequence is DLQLWTHRDSRVHFGLEDVP. Residues 1311-1331 form a helical membrane-spanning segment; it reads LLTWLLGCLSLVLVVVTNEIV. Residues 1332–1360 lie on the Cytoplasmic side of the membrane; it reads KLHEIRVRVRYQKRQKLQFETKLGMNSPF. The GMN; metal-binding motif motif lies at 1355–1357; it reads GMN.

In terms of assembly, forms homooligomers.

The protein localises to the endoplasmic reticulum membrane. Functionally, could function in the uptake of Mg(2+) from the cytosol into the endoplasmic reticulum and regulate intracellular Mg(2+) homeostasis. In Mus musculus (Mouse), this protein is Transmembrane protein 94.